We begin with the raw amino-acid sequence, 362 residues long: Ribosomal RNA large subunit methyltransferase M (362 aa).

S-adenosyl-L-methionine is bound by residues serine 194, 227-230 (CPGG), aspartate 246, aspartate 266, and aspartate 284. Lysine 313 serves as the catalytic Proton acceptor.

This sequence belongs to the class I-like SAM-binding methyltransferase superfamily. RNA methyltransferase RlmE family. RlmM subfamily. Monomer.

It localises to the cytoplasm. The enzyme catalyses cytidine(2498) in 23S rRNA + S-adenosyl-L-methionine = 2'-O-methylcytidine(2498) in 23S rRNA + S-adenosyl-L-homocysteine + H(+). Its function is as follows. Catalyzes the 2'-O-methylation at nucleotide C2498 in 23S rRNA. This Aggregatibacter aphrophilus (strain NJ8700) (Haemophilus aphrophilus) protein is Ribosomal RNA large subunit methyltransferase M.